The primary structure comprises 485 residues: Glutamyl-tRNA(Gln) amidotransferase subunit A (485 aa).

Active-site charge relay system residues include K76 and S151. Catalysis depends on S175, which acts as the Acyl-ester intermediate.

The protein belongs to the amidase family. GatA subfamily. As to quaternary structure, heterotrimer of A, B and C subunits.

It carries out the reaction L-glutamyl-tRNA(Gln) + L-glutamine + ATP + H2O = L-glutaminyl-tRNA(Gln) + L-glutamate + ADP + phosphate + H(+). In terms of biological role, allows the formation of correctly charged Gln-tRNA(Gln) through the transamidation of misacylated Glu-tRNA(Gln) in organisms which lack glutaminyl-tRNA synthetase. The reaction takes place in the presence of glutamine and ATP through an activated gamma-phospho-Glu-tRNA(Gln). This chain is Glutamyl-tRNA(Gln) amidotransferase subunit A, found in Chlorobium luteolum (strain DSM 273 / BCRC 81028 / 2530) (Pelodictyon luteolum).